We begin with the raw amino-acid sequence, 35 residues long: Water stress-responsive protein 7 (35 aa).

In Pinus pinaster (Maritime pine), this protein is Water stress-responsive protein 7.